An 86-amino-acid chain; its full sequence is Toxin TdNa7 (86 aa).

The N-terminal stretch at 1 to 20 (MTRFVLFLSCFFLIGMVVEC) is a signal peptide. The region spanning 21 to 83 (KDGYLMGPDG…TWERATNTCG (63 aa)) is the LCN-type CS-alpha/beta domain. 4 disulfide bridges follow: C31–C82, C35–C57, C43–C63, and C47–C65. Residue K84 is modified to Lysine amide.

This sequence belongs to the long (4 C-C) scorpion toxin superfamily. Sodium channel inhibitor family. Beta subfamily. In terms of tissue distribution, expressed by the venom gland.

The protein localises to the secreted. Its function is as follows. Beta toxins bind voltage-independently at site-4 of sodium channels (Nav) and shift the voltage of activation toward more negative potentials thereby affecting sodium channel activation and promoting spontaneous and repetitive firing. This is Toxin TdNa7 from Tityus discrepans (Venezuelan scorpion).